The primary structure comprises 209 residues: Amelotin (209 aa).

An N-terminal signal peptide occupies residues 1–16; it reads MRSTILLFCLLGSTRS. The disordered stretch occupies residues 142–209; sequence AGANPDVQDG…ATTESANGIQ (68 aa).

This sequence belongs to the amelotin family. Phosphorylated by FAM20C in vitro. In terms of processing, O-glycosylated.

Its subcellular location is the secreted. Functionally, is a promoter of calcium phosphate mineralization, playing a critical role in the formation of the compact, mineralized, aprismatic enamel surface layer during the maturation stage of amelogenesis. This is Amelotin (AMTN) from Homo sapiens (Human).